The primary structure comprises 311 residues: Aspartate carbamoyltransferase catalytic subunit (311 aa).

Carbamoyl phosphate contacts are provided by R55 and T56. K85 lines the L-aspartate pocket. Residues R106, H135, and Q138 each contribute to the carbamoyl phosphate site. L-aspartate is bound by residues R168 and R230. Residues L268 and P269 each coordinate carbamoyl phosphate.

Belongs to the aspartate/ornithine carbamoyltransferase superfamily. ATCase family. In terms of assembly, heterododecamer (2C3:3R2) of six catalytic PyrB chains organized as two trimers (C3), and six regulatory PyrI chains organized as three dimers (R2).

It catalyses the reaction carbamoyl phosphate + L-aspartate = N-carbamoyl-L-aspartate + phosphate + H(+). It participates in pyrimidine metabolism; UMP biosynthesis via de novo pathway; (S)-dihydroorotate from bicarbonate: step 2/3. Functionally, catalyzes the condensation of carbamoyl phosphate and aspartate to form carbamoyl aspartate and inorganic phosphate, the committed step in the de novo pyrimidine nucleotide biosynthesis pathway. This Escherichia coli (strain 55989 / EAEC) protein is Aspartate carbamoyltransferase catalytic subunit.